The following is a 329-amino-acid chain: Lipoyl synthase (329 aa).

Positions 55, 60, 66, 81, 85, 88, and 292 each coordinate [4Fe-4S] cluster. The Radical SAM core domain maps to 67 to 281; that stretch reads WEDREATFLI…RDEAEAIGFL (215 aa).

This sequence belongs to the radical SAM superfamily. Lipoyl synthase family. The cofactor is [4Fe-4S] cluster.

It localises to the cytoplasm. The catalysed reaction is [[Fe-S] cluster scaffold protein carrying a second [4Fe-4S](2+) cluster] + N(6)-octanoyl-L-lysyl-[protein] + 2 oxidized [2Fe-2S]-[ferredoxin] + 2 S-adenosyl-L-methionine + 4 H(+) = [[Fe-S] cluster scaffold protein] + N(6)-[(R)-dihydrolipoyl]-L-lysyl-[protein] + 4 Fe(3+) + 2 hydrogen sulfide + 2 5'-deoxyadenosine + 2 L-methionine + 2 reduced [2Fe-2S]-[ferredoxin]. It functions in the pathway protein modification; protein lipoylation via endogenous pathway; protein N(6)-(lipoyl)lysine from octanoyl-[acyl-carrier-protein]: step 2/2. Functionally, catalyzes the radical-mediated insertion of two sulfur atoms into the C-6 and C-8 positions of the octanoyl moiety bound to the lipoyl domains of lipoate-dependent enzymes, thereby converting the octanoylated domains into lipoylated derivatives. The chain is Lipoyl synthase from Leifsonia xyli subsp. xyli (strain CTCB07).